The sequence spans 50 residues: Thymosin beta-4 (50 aa).

The interval 1–50 (MLLPATMSDKPDMAEIEKFDKSKLKKTETQEKNPLPSKETIEQEKQAGES) is disordered. Residue Ser8 is modified to Phosphoserine. Residues 9-31 (DKPDMAEIEKFDKSKLKKTETQE) show a composition bias toward basic and acidic residues. Lys10 bears the N6-acetyllysine mark. Lys18 is subject to N6-acetyllysine; alternate. Residue Lys18 forms a Glycyl lysine isopeptide (Lys-Gly) (interchain with G-Cter in SUMO2); alternate linkage. Thr29 is modified (phosphothreonine). Lys32 bears the N6-acetyllysine mark. Ser37 carries the post-translational modification Phosphoserine. Residue Lys38 is modified to N6-acetyllysine. Over residues 39–50 (ETIEQEKQAGES) the composition is skewed to basic and acidic residues. Position 40 is a phosphothreonine (Thr40). Residue Lys45 is modified to N6-acetyllysine.

It belongs to the thymosin beta family. As to quaternary structure, identified in a complex composed of ACTA1, COBL, GSN AND TMSB4X. Interacts with SERPINB1. AcSDKP is inactivated by ACE, which removes the dipeptide Lys-Pro from its C-terminus. Originally found in thymus but it is widely distributed in many tissues.

Its subcellular location is the cytoplasm. It is found in the cytoskeleton. In terms of biological role, plays an important role in the organization of the cytoskeleton. Binds to and sequesters actin monomers (G actin) and therefore inhibits actin polymerization. Functionally, potent inhibitor of bone marrow derived stem cell differentiation. Acts by inhibits the entry of hematopoietic pluripotent stem cells into the S-phase. This is Thymosin beta-4 (Tmsb4x) from Mus musculus (Mouse).